The sequence spans 239 residues: MALRAEYENSADIGVFTKLTNKYCITAPGGSSSYKIIEQEVSPKIPCVEATIGGLRIIGRLAVGNRKGLLLPNTCNDQELLHLRNSLPDDVVVQRVEERMSALGNCIACNDYVALVHPEIDRETEEIIADVLGVEVFRHAVGGNPLVGTYSVITNKGAMLAPNTTQQEQEEIGTILQVPLVAGTVNRGSNLLGSGMIVNDWCGFVGMDTTATELSIVEGIYKLRNETDVQFASVMELMK.

The protein belongs to the eIF-6 family. In terms of assembly, monomer. Associates with the 60S ribosomal subunit.

Its subcellular location is the cytoplasm. The protein localises to the nucleus. It is found in the nucleolus. In terms of biological role, binds to the 60S ribosomal subunit and prevents its association with the 40S ribosomal subunit to form the 80S initiation complex in the cytoplasm. May also be involved in ribosome biogenesis. In Entamoeba dispar (strain ATCC PRA-260 / SAW760), this protein is Eukaryotic translation initiation factor 6.